Reading from the N-terminus, the 21-residue chain is Sarafotoxin-D (21 aa).

Cystine bridges form between C1–C15 and C3–C11.

It belongs to the endothelin/sarafotoxin family. Expressed by the venom gland.

It localises to the secreted. In terms of biological role, vasoconstrictor activity. These toxins cause cardiac arrest probably as a result of coronary vasospasm. May act by displaying agonistic activities towards endothelin-1 and -2 receptors (EDNRA and EDNRB). This Atractaspis engaddensis (Israeli burrowing asp) protein is Sarafotoxin-D.